Consider the following 892-residue polypeptide: DNA mismatch repair protein MutS (892 aa).

An ATP-binding site is contributed by 607–614; sequence GPNMSGKS. Residues 826–854 are disordered; sequence ETKAETEEESQLSFFGGEQSSKKQDKPVL. Basic and acidic residues predominate over residues 845-854; that stretch reads SSKKQDKPVL.

The protein belongs to the DNA mismatch repair MutS family.

This protein is involved in the repair of mismatches in DNA. It is possible that it carries out the mismatch recognition step. This protein has a weak ATPase activity. The protein is DNA mismatch repair protein MutS of Bacillus cereus (strain AH187).